The chain runs to 488 residues: Monothiol glutaredoxin-S17 (488 aa).

The 106-residue stretch at 2 to 107 (SGTVKDIVSK…LANKVGKVAG (106 aa)) folds into the Thioredoxin domain. Glutaredoxin domains follow at residues 154–256 (KSRL…GITT), 284–386 (RARL…GITG), and 391–488 (EDRL…TLSE). Position 408 (Lys408) interacts with glutathione. Residue Cys416 coordinates [2Fe-2S] cluster. Glutathione-binding positions include Arg445, Phe457, and 470–471 (CD).

This sequence belongs to the glutaredoxin family. CGFS subfamily. As to quaternary structure, [2Fe-2S]-bridged holo-homodimer. Interacts in vitro with SUFE1, BOLA1, BOLA2 and BOLA4. Interacts in vivo only with BOLA2. Interacts with RGLG3 and RGLG4. Post-translationally, ubiquitinated at Lys-154. Polyubiquitinated by RGLG3 and RGLG4. Polyubiquitination of GRXS17 leads to its degradation by the proteasome.

It is found in the cytoplasm. May only reduce GSH-thiol disulfides, but not protein disulfides. Participates probably to the maturation of iron-sulfur proteins and to the regulation of the redox state of the BOLA proteins. The GRXS17-BOLA2 heterodimer binds a labile, oxygen sensitive iron-sulfur cluster. This chain is Monothiol glutaredoxin-S17, found in Arabidopsis thaliana (Mouse-ear cress).